Reading from the N-terminus, the 119-residue chain is Ribonuclease P protein component (119 aa).

Belongs to the RnpA family. In terms of assembly, consists of a catalytic RNA component (M1 or rnpB) and a protein subunit.

It catalyses the reaction Endonucleolytic cleavage of RNA, removing 5'-extranucleotides from tRNA precursor.. Its function is as follows. RNaseP catalyzes the removal of the 5'-leader sequence from pre-tRNA to produce the mature 5'-terminus. It can also cleave other RNA substrates such as 4.5S RNA. The protein component plays an auxiliary but essential role in vivo by binding to the 5'-leader sequence and broadening the substrate specificity of the ribozyme. This Salmonella paratyphi A (strain AKU_12601) protein is Ribonuclease P protein component.